The sequence spans 346 residues: Free fatty acid receptor 3 (346 aa).

Over 1 to 19 (MDTGPDQSYFSGNHWFVFS) the chain is Extracellular. A helical membrane pass occupies residues 20-40 (VYLLTFLVGLPLNLLALVVFV). The Cytoplasmic segment spans residues 41–47 (GKLQRRP). The chain crosses the membrane as a helical span at residues 48-68 (VAVDVLLLNLTASDLLLLLFL). The Extracellular segment spans residues 69–88 (PFRMVEAANGMHWPLPFILC). The cysteines at positions 88 and 169 are disulfide-linked. A helical transmembrane segment spans residues 89-111 (PLSGFIFFTTIYLTALFLAAVSI). The Cytoplasmic segment spans residues 112–132 (ERFLSVAHPLWYKTRPRLGQA). Residues 133–153 (GLVSVACWLLASAHCSVVYVI) traverse the membrane as a helical segment. Residues 154-178 (EFSGDISHSQGTNGTCYLEFRKDQL) are Extracellular-facing. N-linked (GlcNAc...) asparagine glycosylation is present at N166. Residues 179-199 (AILLPVRLEMAVVLFVVPLII) form a helical membrane-spanning segment. Over 200-222 (TSYCYSRLVWILGRGGSHRRQRR) the chain is Cytoplasmic. Residues 223–243 (VAGLLAATLLNFLVCFGPYNV) traverse the membrane as a helical segment. The Extracellular segment spans residues 244–258 (SHVVGYICGESPAWR). Residues 259–279 (IYVTLLSTLNSCVDPFVYYFS) traverse the membrane as a helical segment. The Cytoplasmic portion of the chain corresponds to 280–346 (SSGFQADFHE…TGGQVACAES (67 aa)). The segment covering 307 to 330 (MELKEQKGGEEQRADRPAERKTSE) has biased composition (basic and acidic residues). The tract at residues 307 to 346 (MELKEQKGGEEQRADRPAERKTSEHSQGCGTGGQVACAES) is disordered.

This sequence belongs to the G-protein coupled receptor 1 family. Highest level in adipose tissue, and lower expression across all tissues tested. Expressed in sympathetic ganglia.

The protein resides in the cell membrane. Functionally, g protein-coupled receptor that is activated by a major product of dietary fiber digestion, the short chain fatty acids (SCFAs), and that plays a role in the regulation of whole-body energy homeostasis and in intestinal immunity. In omnivorous mammals, the short chain fatty acids acetate, propionate and butyrate are produced primarily by the gut microbiome that metabolizes dietary fibers. SCFAs serve as a source of energy but also act as signaling molecules. That G protein-coupled receptor is probably coupled to the pertussis toxin-sensitive, G(i/o)-alpha family of G proteins. Its activation results in the formation of inositol 1,4,5-trisphosphate, the mobilization of intracellular calcium, the phosphorylation of the MAPK3/ERK1 and MAPK1/ERK2 kinases and the inhibition of intracellular cAMP accumulation. Activated by SCFAs and by beta-hydroxybutyrate, a ketone body produced by the liver upon starvation, it inhibits N-type calcium channels and modulates the activity of sympathetic neurons through a signaling cascade involving the beta and gamma subunits of its coupled G protein, phospholipase C and MAP kinases. Thereby, it may regulate energy expenditure through the control of the sympathetic nervous system that controls for instance heart rate. Upon activation by SCFAs accumulating in the intestine, it may also signal to the brain via neural circuits which in turn would regulate intestinal gluconeogenesis. May also control the production of hormones involved in whole-body energy homeostasis. May for instance, regulate blood pressure through renin secretion. May also regulate secretion of the PYY peptide by enteroendocrine cells and control gut motility, intestinal transit rate, and the harvesting of energy from SCFAs produced by gut microbiota. May also indirectly regulate the production of LEP/Leptin, a hormone acting on the CNS to inhibit food intake, in response to the presence of short-chain fatty acids in the intestine. Finally, may also play a role in glucose homeostasis. Besides its role in energy homeostasis, may play a role in intestinal immunity. May mediate the activation of the inflammatory and immune response by SCFAs in the gut, regulating the rapid production of chemokines and cytokines by intestinal epithelial cells. Among SCFAs, the fatty acids containing less than 6 carbons, the most potent activators are probably propionate, butyrate and pentanoate while acetate is a poor activator. The protein is Free fatty acid receptor 3 (FFAR3) of Homo sapiens (Human).